Consider the following 325-residue polypeptide: MSEATDKQKQVSAETPLERDLKSKQQSIAATKRKQYRDDKSQIRKQARFEVSTTPEPEQSDSSATTATITELPKKRYYRQRAHSNPFSDHRLEYPKSPESMDWSNLYPKQYDISKVEIADIGCGYGGLMIKLGPQFPKSLILGLEIRVQVTQYVEDRIIALRKNQEIINDKKKKESGGGTGDGDDNDYSYQNIAVLRGNAMKFLPNFFVKGQLSKMFFCFPDPHFKQRKHKARIITNTLLSEYAYVLREGGVVYTITDVEDLHNWMVKHLDEHPLFERLSKEWEDQDKCVEIMYNATEEGQKVTRNKGSKWVACYKRLPSPDDCE.

The interval 1–101 is disordered; the sequence is MSEATDKQKQ…LEYPKSPESM (101 aa). The segment covering 51–69 has biased composition (polar residues); the sequence is VSTTPEPEQSDSSATTATI. S-adenosyl-L-methionine-binding positions include glycine 122, 145–146, 199–200, and cysteine 219; these read EI and NA. The active site involves aspartate 222. Residue 297 to 299 coordinates S-adenosyl-L-methionine; the sequence is TEE.

The protein belongs to the class I-like SAM-binding methyltransferase superfamily. TrmB family. Forms a complex with TRM82.

It localises to the nucleus. The catalysed reaction is guanosine(46) in tRNA + S-adenosyl-L-methionine = N(7)-methylguanosine(46) in tRNA + S-adenosyl-L-homocysteine. It participates in tRNA modification; N(7)-methylguanine-tRNA biosynthesis. Its function is as follows. Catalyzes the formation of N(7)-methylguanine at position 46 (m7G46) in tRNA. The protein is tRNA (guanine-N(7)-)-methyltransferase of Candida albicans (strain SC5314 / ATCC MYA-2876) (Yeast).